The following is a 334-amino-acid chain: Holliday junction branch migration complex subunit RuvB (334 aa).

The large ATPase domain (RuvB-L) stretch occupies residues 4 to 186 (ADRLIAPISN…FGIVQRLEYY (183 aa)). Residues Ile-25, Arg-26, Gly-67, Lys-70, Thr-71, Thr-72, 133–135 (EDY), Arg-176, Tyr-186, and Arg-223 contribute to the ATP site. Residue Thr-71 participates in Mg(2+) binding. Positions 187-257 (KVADLQHIVQ…TADRALNMLD (71 aa)) are small ATPAse domain (RuvB-S). The tract at residues 260-334 (HQGFDYMDRK…RAYLHFGIEK (75 aa)) is head domain (RuvB-H). The DNA site is built by Arg-315 and Arg-320.

Belongs to the RuvB family. In terms of assembly, homohexamer. Forms an RuvA(8)-RuvB(12)-Holliday junction (HJ) complex. HJ DNA is sandwiched between 2 RuvA tetramers; dsDNA enters through RuvA and exits via RuvB. An RuvB hexamer assembles on each DNA strand where it exits the tetramer. Each RuvB hexamer is contacted by two RuvA subunits (via domain III) on 2 adjacent RuvB subunits; this complex drives branch migration. In the full resolvosome a probable DNA-RuvA(4)-RuvB(12)-RuvC(2) complex forms which resolves the HJ.

The protein resides in the cytoplasm. It carries out the reaction ATP + H2O = ADP + phosphate + H(+). In terms of biological role, the RuvA-RuvB-RuvC complex processes Holliday junction (HJ) DNA during genetic recombination and DNA repair, while the RuvA-RuvB complex plays an important role in the rescue of blocked DNA replication forks via replication fork reversal (RFR). RuvA specifically binds to HJ cruciform DNA, conferring on it an open structure. The RuvB hexamer acts as an ATP-dependent pump, pulling dsDNA into and through the RuvAB complex. RuvB forms 2 homohexamers on either side of HJ DNA bound by 1 or 2 RuvA tetramers; 4 subunits per hexamer contact DNA at a time. Coordinated motions by a converter formed by DNA-disengaged RuvB subunits stimulates ATP hydrolysis and nucleotide exchange. Immobilization of the converter enables RuvB to convert the ATP-contained energy into a lever motion, pulling 2 nucleotides of DNA out of the RuvA tetramer per ATP hydrolyzed, thus driving DNA branch migration. The RuvB motors rotate together with the DNA substrate, which together with the progressing nucleotide cycle form the mechanistic basis for DNA recombination by continuous HJ branch migration. Branch migration allows RuvC to scan DNA until it finds its consensus sequence, where it cleaves and resolves cruciform DNA. This chain is Holliday junction branch migration complex subunit RuvB, found in Vibrio cholerae serotype O1 (strain ATCC 39541 / Classical Ogawa 395 / O395).